The chain runs to 206 residues: 3-demethoxyubiquinol 3-hydroxylase (206 aa).

Glutamate 55, glutamate 85, histidine 88, glutamate 137, glutamate 169, and histidine 172 together coordinate Fe cation.

It belongs to the COQ7 family. Fe cation is required as a cofactor.

It is found in the cell membrane. The catalysed reaction is a 5-methoxy-2-methyl-3-(all-trans-polyprenyl)benzene-1,4-diol + AH2 + O2 = a 3-demethylubiquinol + A + H2O. The protein operates within cofactor biosynthesis; ubiquinone biosynthesis. Catalyzes the hydroxylation of 2-nonaprenyl-3-methyl-6-methoxy-1,4-benzoquinol during ubiquinone biosynthesis. In Laribacter hongkongensis (strain HLHK9), this protein is 3-demethoxyubiquinol 3-hydroxylase.